The chain runs to 428 residues: Bacteriochlorophyll synthase 44.5 kDa chain (428 aa).

A run of 12 helical transmembrane segments spans residues 3–23, 32–52, 73–93, 115–135, 144–164, 172–192, 225–245, 269–289, 291–311, 317–337, 358–378, and 393–413; these read LGWL…AVVV, LMVV…ALHY, FFVI…AVAV, GFGV…ATEP, ITWL…GHFL, LLWI…LAVW, AFTF…LILE, GVFF…IGSL, GWVV…VALG, ALVP…VAAI, LWGA…AGAA, and LVFG…TGVV.

This sequence belongs to the PucC family.

It is found in the membrane. It functions in the pathway porphyrin-containing compound metabolism; bacteriochlorophyll biosynthesis (light-independent). This Rhodobacter capsulatus (strain ATCC BAA-309 / NBRC 16581 / SB1003) protein is Bacteriochlorophyll synthase 44.5 kDa chain.